The primary structure comprises 157 residues: SsrA-binding protein (157 aa).

A compositionally biased stretch (basic and acidic residues) spans 136–151 (KRETSAKRDWSREKQR). The tract at residues 136 to 157 (KRETSAKRDWSREKQRLLKQNS) is disordered.

Belongs to the SmpB family.

It localises to the cytoplasm. Its function is as follows. Required for rescue of stalled ribosomes mediated by trans-translation. Binds to transfer-messenger RNA (tmRNA), required for stable association of tmRNA with ribosomes. tmRNA and SmpB together mimic tRNA shape, replacing the anticodon stem-loop with SmpB. tmRNA is encoded by the ssrA gene; the 2 termini fold to resemble tRNA(Ala) and it encodes a 'tag peptide', a short internal open reading frame. During trans-translation Ala-aminoacylated tmRNA acts like a tRNA, entering the A-site of stalled ribosomes, displacing the stalled mRNA. The ribosome then switches to translate the ORF on the tmRNA; the nascent peptide is terminated with the 'tag peptide' encoded by the tmRNA and targeted for degradation. The ribosome is freed to recommence translation, which seems to be the essential function of trans-translation. The protein is SsrA-binding protein of Cereibacter sphaeroides (strain ATCC 17029 / ATH 2.4.9) (Rhodobacter sphaeroides).